Consider the following 116-residue polypeptide: Ribosome-binding factor A (116 aa).

Belongs to the RbfA family. Monomer. Binds 30S ribosomal subunits, but not 50S ribosomal subunits or 70S ribosomes.

Its subcellular location is the cytoplasm. One of several proteins that assist in the late maturation steps of the functional core of the 30S ribosomal subunit. Associates with free 30S ribosomal subunits (but not with 30S subunits that are part of 70S ribosomes or polysomes). Required for efficient processing of 16S rRNA. May interact with the 5'-terminal helix region of 16S rRNA. The sequence is that of Ribosome-binding factor A from Staphylococcus epidermidis (strain ATCC 35984 / DSM 28319 / BCRC 17069 / CCUG 31568 / BM 3577 / RP62A).